The following is a 280-amino-acid chain: Orotidine 5'-phosphate decarboxylase (280 aa).

Lysine 96 functions as the Proton donor in the catalytic mechanism.

Belongs to the OMP decarboxylase family. Type 2 subfamily.

The enzyme catalyses orotidine 5'-phosphate + H(+) = UMP + CO2. Its pathway is pyrimidine metabolism; UMP biosynthesis via de novo pathway; UMP from orotate: step 2/2. In Parabacteroides distasonis (strain ATCC 8503 / DSM 20701 / CIP 104284 / JCM 5825 / NCTC 11152), this protein is Orotidine 5'-phosphate decarboxylase.